The sequence spans 291 residues: Trimeric intracellular cation channel type B (291 aa).

Residues 1–19 (MDSPWDELALAFSRTSMFP) lie on the Lumenal side of the membrane. A helical transmembrane segment spans residues 20 to 33 (FFDIAHYLVSVMAV). At 34 to 50 (KRQPGAAALAWKNPISS) the chain is on the cytoplasmic side. A helical transmembrane segment spans residues 51-70 (WFTAMLHCFGGGILSCLLLA). The Lumenal segment spans residues 71-82 (EPPLKFLANHTN). A helical membrane pass occupies residues 83–99 (ILLASSIWYITFFCPHD). Over 100-104 (LVSQG) the chain is Cytoplasmic. A helical membrane pass occupies residues 105–121 (YSYLPVQLLASGMKEVT). Lys118 and Arg122 together coordinate a 1,2-diacyl-sn-glycero-3-phospho-(1D-myo-inositol-4,5-bisphosphate). Residues 122 to 139 (RTWKIVGGVTHANSYYKN) lie on the Lumenal side of the membrane. A helical transmembrane segment spans residues 140–156 (GWIVMIAIGWARGAGGT). Residues 157–179 (IITNFERLVKGDWKPEGDEWLKM) lie on the Cytoplasmic side of the membrane. The helical transmembrane segment at 180 to 195 (SYPAKVTLLGSVIFTF) threads the bilayer. Topologically, residues 196–207 (QHTQHLAISKHN) are lumenal. Residues 208–227 (LMFLYTIFIVATKITMMTTQ) traverse the membrane as a helical segment. Topologically, residues 228–291 (TSTMTFAPFE…VKKKHTKKNE (64 aa)) are cytoplasmic. A disordered region spans residues 256-291 (KKSEAKSPSNGVGSLASKPVDVASDNVKKKHTKKNE). The residue at position 262 (Ser262) is a Phosphoserine.

It belongs to the TMEM38 family. Homotrimer; conformation seems to be controled by binding to diacylglycerol (DAG).

The protein localises to the endoplasmic reticulum membrane. The enzyme catalyses K(+)(in) = K(+)(out). Channel activity is activated by increased cytosolic Ca(2+) levels and blocked by luminal high Ca(2+) levels. Its function is as follows. Intracellular monovalent cation channel required for maintenance of rapid intracellular calcium release. Acts as a potassium counter-ion channel that functions in synchronization with calcium release from intracellular stores. Activated by increased cytosolic Ca(2+) levels. The polypeptide is Trimeric intracellular cation channel type B (Homo sapiens (Human)).